The following is a 1133-amino-acid chain: DNA repair protein rad8 (1133 aa).

Disordered stretches follow at residues 1-34 (MKRK…SKPN) and 392-413 (PEAR…EEDV). Ser18 carries the post-translational modification Phosphoserine. Positions 516–705 (PNSMPYHRGG…YSLIKFMRYE (190 aa)) constitute a Helicase ATP-binding domain. An ATP-binding site is contributed by 529–536 (DEMGLGKT). The DEGH box motif lies at 656-659 (DEGH). Residues 877 to 923 (CPICCNEPIQNPLLLNCKHACCGDCLSEHIQYQKRRNIIPPLCHTCR) form an RING-type zinc finger. One can recognise a Helicase C-terminal domain in the interval 971–1125 (QLRQLTHSSE…EGKQQVQSIE (155 aa)).

The protein belongs to the SNF2/RAD54 helicase family.

The protein localises to the cytoplasm. The protein resides in the nucleus. In terms of biological role, probable helicase, member of the UBC2/RAD6 epistasis group. Functions with DNA repair protein rad18 in error-free postreplication DNA repair. Involved in the maintenance of wild-type rates of instability of simple repetitive sequences such as poly(GT) repeats. Plays a role in surviving topoisomerase-mediated DNA damage. In Schizosaccharomyces pombe (strain 972 / ATCC 24843) (Fission yeast), this protein is DNA repair protein rad8.